We begin with the raw amino-acid sequence, 143 residues long: Hemoglobin-1 (143 aa).

At S2 the chain carries N-acetylserine. The Globin domain maps to 2–143; that stretch reads SLSAAQKDNV…ALMGMIRPNM (142 aa). H97 contributes to the heme b binding site.

It belongs to the globin family. Monomer.

It is found in the cytoplasm. In terms of biological role, serves to transport hydrogen sulfide to autotrophic bacteria. This chain is Hemoglobin-1, found in Phacoides pectinatus (Thick lucine).